The sequence spans 79 residues: RNA-binding protein Hfq (79 aa).

Residues 10-70 (DVFLNTVRKQ…ISTIMPGQPV (61 aa)) form the Sm domain.

This sequence belongs to the Hfq family. In terms of assembly, homohexamer.

Its function is as follows. RNA chaperone that binds small regulatory RNA (sRNAs) and mRNAs to facilitate mRNA translational regulation in response to envelope stress, environmental stress and changes in metabolite concentrations. Also binds with high specificity to tRNAs. The sequence is that of RNA-binding protein Hfq from Bartonella henselae (strain ATCC 49882 / DSM 28221 / CCUG 30454 / Houston 1) (Rochalimaea henselae).